Here is a 587-residue protein sequence, read N- to C-terminus: Adenine deaminase (587 aa).

Belongs to the metallo-dependent hydrolases superfamily. Adenine deaminase family. Requires Mn(2+) as cofactor.

It carries out the reaction adenine + H2O + H(+) = hypoxanthine + NH4(+). This Shewanella halifaxensis (strain HAW-EB4) protein is Adenine deaminase.